The primary structure comprises 148 residues: MTSPLLISLASCLVAVNQASLIGRCDLAKVLHQEDLDGFEGYSLTDWLCLAFVESDFNITKVNENTDGSFDYGIFQINSHYWCNDYQSRTENNCQVDCQELLSPNLLAIINCAKKIVSGAGGMKNWVKWRLHCAGRPLSYWMTGCHLA.

Positions 1–19 (MTSPLLISLASCLVAVNQA) are cleaved as a signal peptide. The region spanning 20-148 (SLIGRCDLAK…SYWMTGCHLA (129 aa)) is the C-type lysozyme domain. Disulfide bonds link Cys-25-Cys-145, Cys-49-Cys-133, Cys-83-Cys-98, and Cys-94-Cys-112. Catalysis depends on residues Glu-54 and Asp-71.

It belongs to the glycosyl hydrolase 22 family. Monomer.

The protein localises to the secreted. It is found in the cell surface. Its subcellular location is the cell projection. It localises to the cilium. The protein resides in the flagellum. The enzyme catalyses Hydrolysis of (1-&gt;4)-beta-linkages between N-acetylmuramic acid and N-acetyl-D-glucosamine residues in a peptidoglycan and between N-acetyl-D-glucosamine residues in chitodextrins.. Its function is as follows. May be involved sperm-egg plasma membrane adhesion and fusion during fertilization. Exhibits bacteriolytic activity in vitro against Micrococcus luteus and Staphylococcus aureus. Shows weak bacteriolytic activity against Gram-positive bacteria at physiological pH. Bacteriolytic activity is pH-dependent, with a maximum at around pH 5.6. This Bos taurus (Bovine) protein is Lysozyme-like protein 6 (LYZL6).